Here is a 1150-residue protein sequence, read N- to C-terminus: Cohesin subunit SCC3 (1150 aa).

Positions 1 to 12 (MTAVRRSTRIRT) are enriched in basic residues. Positions 1–122 (MTAVRRSTRI…PAYHRSKKDQ (122 aa)) are disordered. The residue at position 28 (serine 28) is a Phosphoserine. Positions 32–43 (VESDKITAKTQH) are enriched in basic and acidic residues. The segment covering 44-72 (EEEEEQDTGESEESSSEDDYEDQDDDDYV) has biased composition (acidic residues). The segment covering 77–87 (AKRKSRKRKPK) has biased composition (basic residues). Positions 305–349 (LTQQAVNLEKNYLAKLSKQLSLEEKKKRPNNKTLEKLESTIAETQ) form a coiled coil. An SCD domain is found at 367–457 (FVHRYKDVSD…ERFKTKILEV (91 aa)). Serine 628 is subject to Phosphoserine. The segment at 1065-1150 (ENPEPNKKNI…IDNSDEITQD (86 aa)) is disordered. Residues 1083-1101 (QREKAPLQPNSERETDHAN) show a composition bias toward basic and acidic residues.

The protein belongs to the SCC3 family. Interacts directly with MCD1 in cohesin complex. Cohesin complexes are composed of the SMC1 and SMC3 heterodimer attached via their hinge domain, MCD1 which link them, and IRR1/SCC3, which interacts with MCD1. The cohesin complex also interacts with SCC2, which is required for its association with chromosomes. Interacts with LIN1. In terms of processing, acetylated by ECO1.

It is found in the nucleus. It localises to the chromosome. Its subcellular location is the centromere. In terms of biological role, component of cohesin complex, a complex required for the cohesion of sister chromatids after DNA replication. The cohesin complex apparently forms a large proteinaceous ring within which sister chromatids can be trapped. At anaphase, the MCD1/SCC1 subunit of the complex is cleaved and dissociates from chromatin, allowing sister chromatids to segregate. The cohesin complex may also play a role in spindle pole assembly during mitosis. This is Cohesin subunit SCC3 (IRR1) from Saccharomyces cerevisiae (strain ATCC 204508 / S288c) (Baker's yeast).